A 406-amino-acid chain; its full sequence is Tryptophan synthase beta chain (406 aa).

Lys99 carries the post-translational modification N6-(pyridoxal phosphate)lysine.

It belongs to the TrpB family. In terms of assembly, tetramer of two alpha and two beta chains. Pyridoxal 5'-phosphate is required as a cofactor.

The enzyme catalyses (1S,2R)-1-C-(indol-3-yl)glycerol 3-phosphate + L-serine = D-glyceraldehyde 3-phosphate + L-tryptophan + H2O. It functions in the pathway amino-acid biosynthesis; L-tryptophan biosynthesis; L-tryptophan from chorismate: step 5/5. The beta subunit is responsible for the synthesis of L-tryptophan from indole and L-serine. This chain is Tryptophan synthase beta chain, found in Brucella abortus (strain 2308).